We begin with the raw amino-acid sequence, 674 residues long: ATP-dependent DNA helicase Hel308 (674 aa).

ATP contacts are provided by residues glutamine 27 and 44-51 (VPTAAGKT). In terms of domain architecture, Helicase ATP-binding spans 31–197 (IEQFRKGKNI…WLNASLIKSS (167 aa)). A DEAH box motif is present at residues 142–145 (DEIH). The 188-residue stretch at 224–411 (DINLLVKETV…PEKVRFNTLA (188 aa)) folds into the Helicase C-terminal domain.

Belongs to the helicase family. Hel308 subfamily. Monomer.

The enzyme catalyses Couples ATP hydrolysis with the unwinding of duplex DNA by translocating in the 3'-5' direction.. The catalysed reaction is ATP + H2O = ADP + phosphate + H(+). Functionally, DNA-dependent ATPase and 3'-5' DNA helicase that may be involved in repair of stalled replication forks. This Thermoplasma volcanium (strain ATCC 51530 / DSM 4299 / JCM 9571 / NBRC 15438 / GSS1) protein is ATP-dependent DNA helicase Hel308.